Consider the following 417-residue polypeptide: UDP-N-acetylglucosamine 1-carboxyvinyltransferase 3 (417 aa).

22–23 (KN) lines the phosphoenolpyruvate pocket. Arginine 92 lines the UDP-N-acetyl-alpha-D-glucosamine pocket. The Proton donor role is filled by cysteine 116. The residue at position 116 (cysteine 116) is a 2-(S-cysteinyl)pyruvic acid O-phosphothioketal. UDP-N-acetyl-alpha-D-glucosamine is bound by residues 121–125 (RPIDQ), aspartate 304, and isoleucine 326.

The protein belongs to the EPSP synthase family. MurA subfamily.

The protein localises to the cytoplasm. It carries out the reaction phosphoenolpyruvate + UDP-N-acetyl-alpha-D-glucosamine = UDP-N-acetyl-3-O-(1-carboxyvinyl)-alpha-D-glucosamine + phosphate. The protein operates within cell wall biogenesis; peptidoglycan biosynthesis. Its function is as follows. Cell wall formation. Adds enolpyruvyl to UDP-N-acetylglucosamine. The polypeptide is UDP-N-acetylglucosamine 1-carboxyvinyltransferase 3 (Caldanaerobacter subterraneus subsp. tengcongensis (strain DSM 15242 / JCM 11007 / NBRC 100824 / MB4) (Thermoanaerobacter tengcongensis)).